The primary structure comprises 185 residues: Somatotropin (185 aa).

Cys52 and Cys158 are oxidised to a cystine. Residue Glu167 coordinates Zn(2+). Cys175 and Cys183 are oxidised to a cystine.

Belongs to the somatotropin/prolactin family.

The protein resides in the secreted. Growth hormone plays an important role in growth control and is involved in the regulation of several anabolic processes. Implicated as an osmoregulatory substance important for seawater adaptation. This chain is Somatotropin (gh), found in Katsuwonus pelamis (Skipjack tuna).